A 417-amino-acid chain; its full sequence is Serine hydroxymethyltransferase (417 aa).

N6-acetyllysine is present on Lys-54. (6S)-5,6,7,8-tetrahydrofolate contacts are provided by residues Leu-121 and 125-127; that span reads GHL. An N6-(pyridoxal phosphate)lysine modification is found at Lys-229. Lys-250, Lys-285, and Lys-354 each carry N6-acetyllysine. 355-357 contributes to the (6S)-5,6,7,8-tetrahydrofolate binding site; that stretch reads SPF. The residue at position 375 (Lys-375) is an N6-acetyllysine.

The protein belongs to the SHMT family. As to quaternary structure, homodimer. Pyridoxal 5'-phosphate is required as a cofactor.

The protein resides in the cytoplasm. It catalyses the reaction (6R)-5,10-methylene-5,6,7,8-tetrahydrofolate + glycine + H2O = (6S)-5,6,7,8-tetrahydrofolate + L-serine. It functions in the pathway one-carbon metabolism; tetrahydrofolate interconversion. The protein operates within amino-acid biosynthesis; glycine biosynthesis; glycine from L-serine: step 1/1. In terms of biological role, catalyzes the reversible interconversion of serine and glycine with tetrahydrofolate (THF) serving as the one-carbon carrier. This reaction serves as the major source of one-carbon groups required for the biosynthesis of purines, thymidylate, methionine, and other important biomolecules. Also exhibits THF-independent aldolase activity toward beta-hydroxyamino acids, producing glycine and aldehydes, via a retro-aldol mechanism. The protein is Serine hydroxymethyltransferase of Escherichia coli O17:K52:H18 (strain UMN026 / ExPEC).